The sequence spans 130 residues: Phosphoribosyl-AMP cyclohydrolase (130 aa).

Aspartate 78 lines the Mg(2+) pocket. Cysteine 79 is a binding site for Zn(2+). The Mg(2+) site is built by aspartate 80 and aspartate 82. Zn(2+)-binding residues include cysteine 96 and cysteine 103.

It belongs to the PRA-CH family. As to quaternary structure, homodimer. Mg(2+) is required as a cofactor. The cofactor is Zn(2+).

It localises to the cytoplasm. It carries out the reaction 1-(5-phospho-beta-D-ribosyl)-5'-AMP + H2O = 1-(5-phospho-beta-D-ribosyl)-5-[(5-phospho-beta-D-ribosylamino)methylideneamino]imidazole-4-carboxamide. It functions in the pathway amino-acid biosynthesis; L-histidine biosynthesis; L-histidine from 5-phospho-alpha-D-ribose 1-diphosphate: step 3/9. Catalyzes the hydrolysis of the adenine ring of phosphoribosyl-AMP. The chain is Phosphoribosyl-AMP cyclohydrolase from Nitrosospira multiformis (strain ATCC 25196 / NCIMB 11849 / C 71).